A 376-amino-acid chain; its full sequence is Eugenol O-methyltransferase (376 aa).

Glycine 219, aspartate 242, methionine 263, and lysine 276 together coordinate S-adenosyl-L-methionine. Histidine 280 functions as the Proton acceptor in the catalytic mechanism.

This sequence belongs to the class I-like SAM-binding methyltransferase superfamily. Cation-independent O-methyltransferase family. COMT subfamily. Homodimer. Expressed predominantly in root hairs.

It catalyses the reaction (E)-isoeugenol + S-adenosyl-L-methionine = (E)-isomethyleugenol + S-adenosyl-L-homocysteine + H(+). O-methyltransferase. Substrate preference is eugenol &gt;&gt; orcinol monomethyl ether &gt; resorcinol monomethyl ether. The protein is Eugenol O-methyltransferase (EOMT) of Sorghum bicolor (Sorghum).